A 430-amino-acid chain; its full sequence is Glutamate-1-semialdehyde 2,1-aminomutase 2 (430 aa).

The residue at position 269 (Lys269) is an N6-(pyridoxal phosphate)lysine.

The protein belongs to the class-III pyridoxal-phosphate-dependent aminotransferase family. HemL subfamily. In terms of assembly, homodimer. It depends on pyridoxal 5'-phosphate as a cofactor.

It localises to the cytoplasm. The enzyme catalyses (S)-4-amino-5-oxopentanoate = 5-aminolevulinate. The protein operates within porphyrin-containing compound metabolism; protoporphyrin-IX biosynthesis; 5-aminolevulinate from L-glutamyl-tRNA(Glu): step 2/2. The polypeptide is Glutamate-1-semialdehyde 2,1-aminomutase 2 (Lysinibacillus sphaericus (strain C3-41)).